Consider the following 296-residue polypeptide: Probable GTP 3',8-cyclase (296 aa).

The Radical SAM core domain occupies E5–K230. R14 serves as a coordination point for GTP. [4Fe-4S] cluster contacts are provided by C21 and C25. Position 27 (Y27) interacts with S-adenosyl-L-methionine. A [4Fe-4S] cluster-binding site is contributed by C28. K61 contributes to the GTP binding site. G65 contributes to the S-adenosyl-L-methionine binding site. T89 provides a ligand contact to GTP. S113 provides a ligand contact to S-adenosyl-L-methionine. Position 150 (K150) interacts with GTP. [4Fe-4S] cluster contacts are provided by C245 and C248. A GTP-binding site is contributed by R250 to R252. C262 lines the [4Fe-4S] cluster pocket.

The protein belongs to the radical SAM superfamily. MoaA family. The cofactor is [4Fe-4S] cluster.

The catalysed reaction is GTP + AH2 + S-adenosyl-L-methionine = (8S)-3',8-cyclo-7,8-dihydroguanosine 5'-triphosphate + 5'-deoxyadenosine + L-methionine + A + H(+). It participates in cofactor biosynthesis; molybdopterin biosynthesis. Its function is as follows. Catalyzes the cyclization of GTP to (8S)-3',8-cyclo-7,8-dihydroguanosine 5'-triphosphate. The polypeptide is Probable GTP 3',8-cyclase (Archaeoglobus fulgidus (strain ATCC 49558 / DSM 4304 / JCM 9628 / NBRC 100126 / VC-16)).